The primary structure comprises 113 residues: Large ribosomal subunit protein uL24 (113 aa).

The tract at residues 48–70 (HRKRVTNDKGTSSGGLEKRESPM) is disordered.

Belongs to the universal ribosomal protein uL24 family. In terms of assembly, part of the 50S ribosomal subunit.

Functionally, one of two assembly initiator proteins, it binds directly to the 5'-end of the 23S rRNA, where it nucleates assembly of the 50S subunit. One of the proteins that surrounds the polypeptide exit tunnel on the outside of the subunit. This is Large ribosomal subunit protein uL24 from Tropheryma whipplei (strain TW08/27) (Whipple's bacillus).